Consider the following 242-residue polypeptide: Type III pantothenate kinase (242 aa).

Residue 7 to 14 (DLGNSRFK) participates in ATP binding. Substrate is bound by residues Tyr91 and 98 to 101 (GVDR). Asp100 (proton acceptor) is an active-site residue. ATP is bound at residue Thr121. A substrate-binding site is contributed by Thr171.

Belongs to the type III pantothenate kinase family. In terms of assembly, homodimer. NH4(+) is required as a cofactor. It depends on K(+) as a cofactor.

The protein resides in the cytoplasm. It catalyses the reaction (R)-pantothenate + ATP = (R)-4'-phosphopantothenate + ADP + H(+). It functions in the pathway cofactor biosynthesis; coenzyme A biosynthesis; CoA from (R)-pantothenate: step 1/5. Catalyzes the phosphorylation of pantothenate (Pan), the first step in CoA biosynthesis. The sequence is that of Type III pantothenate kinase from Xanthomonas oryzae pv. oryzae (strain MAFF 311018).